The primary structure comprises 261 residues: Cytochrome c oxidase subunit 3 (261 aa).

Over 1–15 the chain is Mitochondrial matrix; it reads MTHQTHAYHMVNPSP. The helical transmembrane segment at 16-34 threads the bilayer; the sequence is WPLTGALSALLMTSGLIMW. At 35–40 the chain is on the mitochondrial intermembrane side; that stretch reads FHFNST. A helical transmembrane segment spans residues 41-66; the sequence is TLLMLGLTTNMLTMYQWWRDVIREST. Topologically, residues 67–72 are mitochondrial matrix; it reads FQGHHT. A helical membrane pass occupies residues 73 to 105; that stretch reads PNVQKGLRYGMILFIISEVLFFTGFFWAFYHSS. Residues 106–128 are Mitochondrial intermembrane-facing; sequence LAPTPELGGCWPPTGIHPLNPLE. The chain crosses the membrane as a helical span at residues 129-152; that stretch reads VPLLNTSVLLASGVSITWAHHSLM. Residues 153–155 are Mitochondrial matrix-facing; it reads EGN. Residues 156-183 traverse the membrane as a helical segment; that stretch reads RNHMLQALFITIALGVYFTLLQASEYYE. Over 184–190 the chain is Mitochondrial intermembrane; the sequence is APFTISD. Residues 191-223 form a helical membrane-spanning segment; that stretch reads GVYGSTFFVATGFHGLHVIIGSTFLIVCFFRQL. The Mitochondrial matrix portion of the chain corresponds to 224 to 232; that stretch reads KFHFTSSHH. The chain crosses the membrane as a helical span at residues 233–256; sequence FGFEAAAWYWHFVDVVWLFLYVSI. At 257 to 261 the chain is on the mitochondrial intermembrane side; the sequence is YWWGS.

It belongs to the cytochrome c oxidase subunit 3 family. As to quaternary structure, component of the cytochrome c oxidase (complex IV, CIV), a multisubunit enzyme composed of 14 subunits. The complex is composed of a catalytic core of 3 subunits MT-CO1, MT-CO2 and MT-CO3, encoded in the mitochondrial DNA, and 11 supernumerary subunits COX4I, COX5A, COX5B, COX6A, COX6B, COX6C, COX7A, COX7B, COX7C, COX8 and NDUFA4, which are encoded in the nuclear genome. The complex exists as a monomer or a dimer and forms supercomplexes (SCs) in the inner mitochondrial membrane with NADH-ubiquinone oxidoreductase (complex I, CI) and ubiquinol-cytochrome c oxidoreductase (cytochrome b-c1 complex, complex III, CIII), resulting in different assemblies (supercomplex SCI(1)III(2)IV(1) and megacomplex MCI(2)III(2)IV(2)).

It localises to the mitochondrion inner membrane. It catalyses the reaction 4 Fe(II)-[cytochrome c] + O2 + 8 H(+)(in) = 4 Fe(III)-[cytochrome c] + 2 H2O + 4 H(+)(out). In terms of biological role, component of the cytochrome c oxidase, the last enzyme in the mitochondrial electron transport chain which drives oxidative phosphorylation. The respiratory chain contains 3 multisubunit complexes succinate dehydrogenase (complex II, CII), ubiquinol-cytochrome c oxidoreductase (cytochrome b-c1 complex, complex III, CIII) and cytochrome c oxidase (complex IV, CIV), that cooperate to transfer electrons derived from NADH and succinate to molecular oxygen, creating an electrochemical gradient over the inner membrane that drives transmembrane transport and the ATP synthase. Cytochrome c oxidase is the component of the respiratory chain that catalyzes the reduction of oxygen to water. Electrons originating from reduced cytochrome c in the intermembrane space (IMS) are transferred via the dinuclear copper A center (CU(A)) of subunit 2 and heme A of subunit 1 to the active site in subunit 1, a binuclear center (BNC) formed by heme A3 and copper B (CU(B)). The BNC reduces molecular oxygen to 2 water molecules using 4 electrons from cytochrome c in the IMS and 4 protons from the mitochondrial matrix. The protein is Cytochrome c oxidase subunit 3 (MT-CO3) of Gazella bennettii (Chinkara).